The following is a 169-amino-acid chain: Endoribonuclease YbeY (169 aa).

The Zn(2+) site is built by His-128, His-132, and His-138.

This sequence belongs to the endoribonuclease YbeY family. The cofactor is Zn(2+).

Its subcellular location is the cytoplasm. Single strand-specific metallo-endoribonuclease involved in late-stage 70S ribosome quality control and in maturation of the 3' terminus of the 16S rRNA. This chain is Endoribonuclease YbeY, found in Rhizorhabdus wittichii (strain DSM 6014 / CCUG 31198 / JCM 15750 / NBRC 105917 / EY 4224 / RW1) (Sphingomonas wittichii).